The sequence spans 458 residues: UPF0210 protein MmarC5_0151 (458 aa).

It belongs to the UPF0210 family.

The protein is UPF0210 protein MmarC5_0151 of Methanococcus maripaludis (strain C5 / ATCC BAA-1333).